The primary structure comprises 333 residues: MVINDIESLTAQALAEVAAAQNLDHLEFLRVALLGKNGSITLQLKQLGKLPVEQRKAIGEKLNRVRDLISDALMDRKAALESAALSKRLIDERVDVTLPGRRGERAGLHPVTRTLERITEIFARLGYELVEGPEIEDDWHNFEALNFPLHHPARAMHDTFYFGDGRLLRTHTSGVQVRYMSDHRPPLRMIAAGKVYRSDSDQTHSPMFHQIEGLLLDKHATFVDLKGTLSEFLRAFFERDFEVRFRPSYFPFVEPGAEVDIAWQQSDSSVRWLEVLGCGMVHPNVLKNVGIDSECYTGFAFGLGVERFAMLRYGVDDLRAFFENDVRFLRQFS.

Glu-254 contributes to the Mg(2+) binding site.

This sequence belongs to the class-II aminoacyl-tRNA synthetase family. Phe-tRNA synthetase alpha subunit type 1 subfamily. Tetramer of two alpha and two beta subunits. Mg(2+) is required as a cofactor.

Its subcellular location is the cytoplasm. The catalysed reaction is tRNA(Phe) + L-phenylalanine + ATP = L-phenylalanyl-tRNA(Phe) + AMP + diphosphate + H(+). The protein is Phenylalanine--tRNA ligase alpha subunit of Xylella fastidiosa (strain M23).